We begin with the raw amino-acid sequence, 328 residues long: Tetraacyldisaccharide 4'-kinase (328 aa).

55-62 (TAGGNGKT) is an ATP binding site.

This sequence belongs to the LpxK family.

It catalyses the reaction a lipid A disaccharide + ATP = a lipid IVA + ADP + H(+). The protein operates within glycolipid biosynthesis; lipid IV(A) biosynthesis; lipid IV(A) from (3R)-3-hydroxytetradecanoyl-[acyl-carrier-protein] and UDP-N-acetyl-alpha-D-glucosamine: step 6/6. In terms of biological role, transfers the gamma-phosphate of ATP to the 4'-position of a tetraacyldisaccharide 1-phosphate intermediate (termed DS-1-P) to form tetraacyldisaccharide 1,4'-bis-phosphate (lipid IVA). In Escherichia coli (strain SMS-3-5 / SECEC), this protein is Tetraacyldisaccharide 4'-kinase.